Reading from the N-terminus, the 302-residue chain is Phytoene synthase (302 aa).

It belongs to the phytoene/squalene synthase family. The cofactor is ATP. It depends on Mn(2+) as a cofactor. Mg(2+) is required as a cofactor.

The protein operates within carotenoid biosynthesis; phytoene biosynthesis. Functionally, involved in the biosynthesis of carotenoids. Catalyzes the condensation of two molecules of geranylgeranyl diphosphate (GGPP) to give prephytoene diphosphate (PPPP) and the subsequent rearrangement of the cyclopropylcarbinyl intermediate to yield phytoene. This Mycobacterium bovis (strain ATCC BAA-935 / AF2122/97) protein is Phytoene synthase (crtB).